Here is a 61-residue protein sequence, read N- to C-terminus: MAKKSMIAKNNRPAKFAVQEYTRCQRCGRPHSVYRKFKLCRICLRELAHAGQIPGMRKASW.

Residues Cys-24, Cys-27, Cys-40, and Cys-43 each coordinate Zn(2+).

Belongs to the universal ribosomal protein uS14 family. Zinc-binding uS14 subfamily. In terms of assembly, part of the 30S ribosomal subunit. Contacts proteins S3 and S10. Zn(2+) is required as a cofactor.

Its function is as follows. Binds 16S rRNA, required for the assembly of 30S particles and may also be responsible for determining the conformation of the 16S rRNA at the A site. In Lacticaseibacillus paracasei (strain ATCC 334 / BCRC 17002 / CCUG 31169 / CIP 107868 / KCTC 3260 / NRRL B-441) (Lactobacillus paracasei), this protein is Small ribosomal subunit protein uS14B.